The primary structure comprises 208 residues: Probable GTP-binding protein EngB (208 aa).

In terms of domain architecture, EngB-type G spans 23–205; it reads LTSEMVILGR…RQTLLKYLLT (183 aa). GTP is bound by residues 31 to 38, 57 to 61, 84 to 87, 154 to 157, and 182 to 184; these read GRSNVGKS, GKTRL, DLPG, TKFD, and FNA. Ser38 and Thr59 together coordinate Mg(2+).

This sequence belongs to the TRAFAC class TrmE-Era-EngA-EngB-Septin-like GTPase superfamily. EngB GTPase family. Mg(2+) serves as cofactor.

Its function is as follows. Necessary for normal cell division and for the maintenance of normal septation. This Helicobacter pylori (strain J99 / ATCC 700824) (Campylobacter pylori J99) protein is Probable GTP-binding protein EngB.